Reading from the N-terminus, the 453-residue chain is GTPase Der (453 aa).

2 consecutive EngA-type G domains span residues 3–167 (FTLA…PAQT) and 187–360 (IKVA…AVWN). Residues 9–16 (GRPNVGKS), 56–60 (DTAGL), 119–122 (NKSE), 193–200 (GRPNAGKS), 240–244 (DTAGL), and 305–308 (NKSD) contribute to the GTP site. The 85-residue stretch at 361–445 (TRIPTNPLNR…PIRLTLREKG (85 aa)) folds into the KH-like domain.

It belongs to the TRAFAC class TrmE-Era-EngA-EngB-Septin-like GTPase superfamily. EngA (Der) GTPase family. As to quaternary structure, associates with the 50S ribosomal subunit.

In terms of biological role, GTPase that plays an essential role in the late steps of ribosome biogenesis. This chain is GTPase Der, found in Azorhizobium caulinodans (strain ATCC 43989 / DSM 5975 / JCM 20966 / LMG 6465 / NBRC 14845 / NCIMB 13405 / ORS 571).